The primary structure comprises 226 residues: Elongation factor 1-delta (226 aa).

Positions 82-131 are disordered; that stretch reads SSVATPPVADTKASAAEDDDDDDVDLFGEETEEEKKASEERAAAVKASGK. Residues 97–113 are compositionally biased toward acidic residues; that stretch reads AEDDDDDDVDLFGEETE. Over residues 114 to 124 the composition is skewed to basic and acidic residues; that stretch reads EEKKASEERAA.

The protein belongs to the EF-1-beta/EF-1-delta family. In terms of assembly, EF-1 is composed of 4 subunits: alpha, beta (1B-alpha=beta'), delta (1B-beta), and gamma (1B-gamma).

In terms of biological role, EF-1-beta and EF-1-beta' stimulate the exchange of GDP bound to EF-1-alpha to GTP. The sequence is that of Elongation factor 1-delta from Spuriopimpinella brachycarpa (Chamnamul).